Here is a 110-residue protein sequence, read N- to C-terminus: Phosphoribosyl-AMP cyclohydrolase (110 aa).

Asp-74 provides a ligand contact to Mg(2+). Zn(2+) is bound at residue Cys-75. Asp-76 and Asp-78 together coordinate Mg(2+). Residues Cys-91 and Cys-98 each coordinate Zn(2+).

It belongs to the PRA-CH family. As to quaternary structure, homodimer. Requires Mg(2+) as cofactor. The cofactor is Zn(2+).

Its subcellular location is the cytoplasm. The enzyme catalyses 1-(5-phospho-beta-D-ribosyl)-5'-AMP + H2O = 1-(5-phospho-beta-D-ribosyl)-5-[(5-phospho-beta-D-ribosylamino)methylideneamino]imidazole-4-carboxamide. It functions in the pathway amino-acid biosynthesis; L-histidine biosynthesis; L-histidine from 5-phospho-alpha-D-ribose 1-diphosphate: step 3/9. Functionally, catalyzes the hydrolysis of the adenine ring of phosphoribosyl-AMP. The chain is Phosphoribosyl-AMP cyclohydrolase from Lacticaseibacillus casei (strain BL23) (Lactobacillus casei).